The following is a 218-amino-acid chain: Large ribosomal subunit protein uL3 (218 aa).

This sequence belongs to the universal ribosomal protein uL3 family. As to quaternary structure, part of the 50S ribosomal subunit. Forms a cluster with proteins L14 and L19.

Functionally, one of the primary rRNA binding proteins, it binds directly near the 3'-end of the 23S rRNA, where it nucleates assembly of the 50S subunit. This Corynebacterium glutamicum (strain R) protein is Large ribosomal subunit protein uL3.